The following is a 625-amino-acid chain: Endoglucanase 13 (625 aa).

The first 34 residues, methionine 1–alanine 34, serve as a signal peptide directing secretion. Aspartate 91 acts as the Nucleophile in catalysis. Residue histidine 427 is part of the active site. An N-linked (GlcNAc...) asparagine glycan is attached at asparagine 440. Active-site residues include aspartate 479 and glutamate 488. The segment at alanine 509–proline 530 is disordered.

Belongs to the glycosyl hydrolase 9 (cellulase E) family. Expressed in roots and flowers.

It is found in the secreted. The catalysed reaction is Endohydrolysis of (1-&gt;4)-beta-D-glucosidic linkages in cellulose, lichenin and cereal beta-D-glucans.. The protein is Endoglucanase 13 (GLU6) of Oryza sativa subsp. japonica (Rice).